A 961-amino-acid polypeptide reads, in one-letter code: Glycine dehydrogenase (decarboxylating) (961 aa).

N6-(pyridoxal phosphate)lysine is present on lysine 709.

Belongs to the GcvP family. The glycine cleavage system is composed of four proteins: P, T, L and H. The cofactor is pyridoxal 5'-phosphate.

It carries out the reaction N(6)-[(R)-lipoyl]-L-lysyl-[glycine-cleavage complex H protein] + glycine + H(+) = N(6)-[(R)-S(8)-aminomethyldihydrolipoyl]-L-lysyl-[glycine-cleavage complex H protein] + CO2. In terms of biological role, the glycine cleavage system catalyzes the degradation of glycine. The P protein binds the alpha-amino group of glycine through its pyridoxal phosphate cofactor; CO(2) is released and the remaining methylamine moiety is then transferred to the lipoamide cofactor of the H protein. The chain is Glycine dehydrogenase (decarboxylating) from Streptomyces avermitilis (strain ATCC 31267 / DSM 46492 / JCM 5070 / NBRC 14893 / NCIMB 12804 / NRRL 8165 / MA-4680).